A 123-amino-acid polypeptide reads, in one-letter code: Large ribosomal subunit protein eL8 (123 aa).

This sequence belongs to the eukaryotic ribosomal protein eL8 family. May be present in up to 3 copies per 70S ribosome. Part of the 50S ribosomal subunit, where it binds 23S rRNA at its canonical site near the L1 stalk, as well as a possible second 50S binding site near helix 25 and a possible third site on the beak of the 30S subunit. Component of box C/D small ribonucleoprotein (sRNP) particles that contain rpl7ae, FlpA and nop5, plus a guide RNA. These sRNP particles form homodimers, giving rise to an asymmetric holoenzyme. Probably part of the RNase P complex.

The protein resides in the cytoplasm. Multifunctional RNA-binding protein that recognizes the K-turn motif in ribosomal RNA, the RNA component of RNase P, box H/ACA, box C/D and box C'/D' sRNAs. Component of the 70S ribosome. Component of a box C/D small ribonucleoprotein (sRNP) particle that is involved in pre-rRNA and tRNA processing. Utilizes the methyl donor S-adenosyl-L-methionine to catalyze the site-specific 2'-hydroxyl methylation of ribose moieties in rRNA and tRNA. Site specificity is provided by a guide RNA that base pairs with the substrate. Methylation occurs at a characteristic distance from the sequence involved in base pairing with the guide RNA. This chain is Large ribosomal subunit protein eL8, found in Pyrococcus furiosus (strain ATCC 43587 / DSM 3638 / JCM 8422 / Vc1).